The chain runs to 118 residues: Holo-[acyl-carrier-protein] synthase (118 aa).

Asp-8 and Glu-58 together coordinate Mg(2+).

The protein belongs to the P-Pant transferase superfamily. AcpS family. Mg(2+) serves as cofactor.

The protein resides in the cytoplasm. It carries out the reaction apo-[ACP] + CoA = holo-[ACP] + adenosine 3',5'-bisphosphate + H(+). Its function is as follows. Transfers the 4'-phosphopantetheine moiety from coenzyme A to a Ser of acyl-carrier-protein. The sequence is that of Holo-[acyl-carrier-protein] synthase from Streptococcus pyogenes serotype M5 (strain Manfredo).